The following is a 243-amino-acid chain: Large ribosomal subunit protein uL2 (243 aa).

A compositionally biased stretch (basic residues) spans 1-12 (MGRRIQGQRRGR). Disordered regions lie at residues 1–38 (MGRR…SDDT) and 198–243 (VDHP…GSSE). Basic and acidic residues-rich tracts occupy residues 24-34 (YKAELSHKQSE) and 221-231 (PPGRKVGDIAS).

The protein belongs to the universal ribosomal protein uL2 family. As to quaternary structure, part of the 50S ribosomal subunit. Forms a bridge to the 30S subunit in the 70S ribosome.

Functionally, one of the primary rRNA binding proteins. Required for association of the 30S and 50S subunits to form the 70S ribosome, for tRNA binding and peptide bond formation. It has been suggested to have peptidyltransferase activity; this is somewhat controversial. Makes several contacts with the 16S rRNA in the 70S ribosome. In Haloquadratum walsbyi (strain DSM 16790 / HBSQ001), this protein is Large ribosomal subunit protein uL2.